Here is a 506-residue protein sequence, read N- to C-terminus: Histidine ammonia-lyase (506 aa).

The 5-imidazolinone (Ala-Gly) cross-link spans 143–145; that stretch reads ASG. Residue Ser-144 is modified to 2,3-didehydroalanine (Ser).

This sequence belongs to the PAL/histidase family. Contains an active site 4-methylidene-imidazol-5-one (MIO), which is formed autocatalytically by cyclization and dehydration of residues Ala-Ser-Gly.

Its subcellular location is the cytoplasm. The enzyme catalyses L-histidine = trans-urocanate + NH4(+). It participates in amino-acid degradation; L-histidine degradation into L-glutamate; N-formimidoyl-L-glutamate from L-histidine: step 1/3. The protein is Histidine ammonia-lyase of Salmonella choleraesuis (strain SC-B67).